The chain runs to 341 residues: S-adenosylmethionine:tRNA ribosyltransferase-isomerase (341 aa).

It belongs to the QueA family. As to quaternary structure, monomer.

The protein resides in the cytoplasm. It carries out the reaction 7-aminomethyl-7-carbaguanosine(34) in tRNA + S-adenosyl-L-methionine = epoxyqueuosine(34) in tRNA + adenine + L-methionine + 2 H(+). It participates in tRNA modification; tRNA-queuosine biosynthesis. Transfers and isomerizes the ribose moiety from AdoMet to the 7-aminomethyl group of 7-deazaguanine (preQ1-tRNA) to give epoxyqueuosine (oQ-tRNA). This Clostridium perfringens (strain SM101 / Type A) protein is S-adenosylmethionine:tRNA ribosyltransferase-isomerase.